A 400-amino-acid polypeptide reads, in one-letter code: NADPH dehydrogenase 2 (400 aa).

FMN contacts are provided by Thr-38 and Gln-115. Substrate-binding residues include His-192 and Asn-195. Tyr-197 acts as the Proton donor in catalysis. Arg-244 and Arg-349 together coordinate FMN. Ser-353 is subject to Phosphoserine. Residue Tyr-376 coordinates substrate. Phosphoserine is present on Ser-379.

It belongs to the NADH:flavin oxidoreductase/NADH oxidase family. In terms of assembly, homodimer or heterodimer with OYE3. The cofactor is FMN.

Its subcellular location is the cytoplasm. The protein localises to the nucleus. It localises to the mitochondrion. The enzyme catalyses A + NADPH + H(+) = AH2 + NADP(+). In terms of biological role, flavin-dependent enoate reductase that catalyzes the chemo- and stereoslective hydrogenation of electron-poor alkenes. The enzyme is reduced by NADPH, and oxygen, quinones, and alpha,beta-unsaturated aldehydes and ketones can act as electron acceptors to complete catalytic turnover. The physiological oxidant remains elusive. Has an antioxidant activity, reducing reactive oxygen species (ROS) levels when overexpressed. Formation of OYE2-OYE3 heterodimers contribute to the induction of programmed cell death upon oxidative stress. This chain is NADPH dehydrogenase 2, found in Saccharomyces cerevisiae (strain ATCC 204508 / S288c) (Baker's yeast).